Reading from the N-terminus, the 1680-residue chain is SWI/SNF chromatin-remodeling complex subunit snf22 (1680 aa).

Disordered regions lie at residues 61–135 (QQMR…SQAS), 203–258 (NNSF…HSFS), 274–300 (RRGSIPVNPSTFSASSPPSGSMLASPY), and 367–427 (YVYR…VPPT). The span at 62–91 (QMRNQSSEFPDAENTNLRKQQDTLPTTGFN) shows a compositional bias: polar residues. Low complexity-rich tracts occupy residues 118-127 (GNGNVGLNNP) and 222-233 (SSLPHSFASPSS). The span at 234-245 (TFEQPHTVQSRA) shows a compositional bias: polar residues. Composition is skewed to low complexity over residues 247-258 (SVDTTSSSHSFS), 282-299 (PSTFSASSPPSGSMLASP), and 374-392 (PPSATSFQPSSSRSPSVDP). A compositionally biased stretch (polar residues) spans 406 to 419 (PSPSASALKTQSHV). The 37-residue stretch at 429-465 (KLNHAQLAMLKSQIVAYNCLNSPNGQVPPAVQQAIFG) folds into the QLQ domain. Polar residues predominate over residues 477-489 (SMPFQQNVPQMSS). The tract at residues 477–499 (SMPFQQNVPQMSSVKKDTPTRDA) is disordered. The segment covering 490-499 (VKKDTPTRDA) has biased composition (basic and acidic residues). Residues 704–776 (QKTEHAMRQK…ARQRLQALRA (73 aa)) enclose the HSA domain. Over residues 817-832 (SNIHSGNTSGKGSNSA) the composition is skewed to polar residues. Residues 817–836 (SNIHSGNTSGKGSNSAELEA) are disordered. The Helicase ATP-binding domain maps to 881–1046 (LSLYNNNLNG…WALLNFVLPK (166 aa)). 894–901 (DEMGLGKT) contributes to the ATP binding site. A DEGH box motif is present at residues 996–999 (DEGH). Positions 1191–1354 (LLDRILPKLF…STPEEREAFL (164 aa)) constitute a Helicase C-terminal domain. The tract at residues 1466-1511 (TVDDPSSTLMPRKRGRPRKKTNSGSSLSTPLSQESSLARSGRKNTP) is disordered. The span at 1476–1486 (PRKRGRPRKKT) shows a compositional bias: basic residues. Positions 1488–1502 (SGSSLSTPLSQESSL) are enriched in low complexity. The Bromo domain maps to 1513 to 1623 (YKQKALRRYC…KTLKEVIEDL (111 aa)).

This sequence belongs to the SNF2/RAD54 helicase family. Component of the SWI/SNF global transcription activator complex composed of at least arp9, arp42, snf5, snf22, snf30, sbf59, sol1, ssr1, ssr2, ssr3, ssr4 and tfg3.

The protein localises to the nucleus. Functionally, helicase. Component of the SWI/SNF complex, an ATP-dependent chromatin remodeling complex, required for the positive and negative regulation of gene expression of a large number of genes. It changes chromatin structure by altering DNA-histone contacts within a nucleosome, leading eventually to a change in nucleosome position, thus facilitating or repressing binding of gene-specific transcription factors. In Schizosaccharomyces pombe (strain 972 / ATCC 24843) (Fission yeast), this protein is SWI/SNF chromatin-remodeling complex subunit snf22 (snf22).